The primary structure comprises 138 residues: Small ribosomal subunit protein bS18m (138 aa).

It belongs to the bacterial ribosomal protein bS18 family. In terms of assembly, component of the mitochondrial small ribosomal subunit. Mature mitochondrial ribosomes consist of a small (37S) and a large (54S) subunit. The 37S subunit contains at least 33 different proteins and 1 molecule of RNA (15S). The 54S subunit contains at least 45 different proteins and 1 molecule of RNA (21S).

It is found in the mitochondrion. This Saccharomyces cerevisiae (strain RM11-1a) (Baker's yeast) protein is Small ribosomal subunit protein bS18m (RSM18).